Here is a 278-residue protein sequence, read N- to C-terminus: Hydroxyethylthiazole kinase (278 aa).

M48 contacts substrate. ATP is bound by residues R124 and T175. G202 serves as a coordination point for substrate.

The protein belongs to the Thz kinase family. Mg(2+) serves as cofactor.

The enzyme catalyses 5-(2-hydroxyethyl)-4-methylthiazole + ATP = 4-methyl-5-(2-phosphooxyethyl)-thiazole + ADP + H(+). It functions in the pathway cofactor biosynthesis; thiamine diphosphate biosynthesis; 4-methyl-5-(2-phosphoethyl)-thiazole from 5-(2-hydroxyethyl)-4-methylthiazole: step 1/1. Its function is as follows. Catalyzes the phosphorylation of the hydroxyl group of 4-methyl-5-beta-hydroxyethylthiazole (THZ). This Clostridium botulinum (strain Alaska E43 / Type E3) protein is Hydroxyethylthiazole kinase.